The sequence spans 1112 residues: Mediator of RNA polymerase II transcription subunit 14 (1112 aa).

3 disordered regions span residues 1-76 (MPGV…INES), 120-141 (SPHG…QSPE), and 1088-1112 (TNSA…ITID). Residues 20–39 (SPDNVSSTPFPQERVNQSGD) are compositionally biased toward polar residues. Over residues 64–73 (IETHTGKDGI) the composition is skewed to basic and acidic residues. The span at 1088 to 1099 (TNSAGARSSQQC) shows a compositional bias: polar residues.

It belongs to the Mediator complex subunit 14 family. Component of the Mediator complex.

The protein localises to the nucleus. Functionally, component of the Mediator complex, a coactivator involved in the regulated transcription of nearly all RNA polymerase II-dependent genes. Mediator functions as a bridge to convey information from gene-specific regulatory proteins to the basal RNA polymerase II transcription machinery. Mediator is recruited to promoters by direct interactions with regulatory proteins and serves as a scaffold for the assembly of a functional preinitiation complex with RNA polymerase II and the general transcription factors. The chain is Mediator of RNA polymerase II transcription subunit 14 (rgr1) from Aspergillus clavatus (strain ATCC 1007 / CBS 513.65 / DSM 816 / NCTC 3887 / NRRL 1 / QM 1276 / 107).